We begin with the raw amino-acid sequence, 687 residues long: Chloride channel protein ClC-Ka (687 aa).

5 helical membrane passes run 52-72 (FLVALGVLMALISYAMNFAIG), 94-114 (LSWTVYPVALLSFSSGFSQSI), 161-181 (IFLGKVGPFVHLSVMISAYLG), 204-224 (AAAVGVATVFAAPFSGVLFSI), and 236-256 (YWRGFFAATCGAFMFRLLGVF). Residues glutamate 259, glutamate 261, aspartate 278, and glutamate 281 each coordinate Ca(2+). The next 6 membrane-spanning stretches (helical) occupy residues 282-302 (IFFFVALGFICGVLSCAYLFC), 325-345 (PSYAALVALVLASITYPPGVG), 396-416 (FTIFGTLAFFLVMKFWMLILA), 417-437 (TTIPMPAGYFMPIFIIGAAIG), 458-478 (VNPIMPGGYALAGAAAFSGAV), and 486-506 (LLAFELTGQIVHALPVLMAVL). At 507–687 (AANAISQNCQ…STLINPPAPK (181 aa)) the chain is on the cytoplasmic side. CBS domains lie at 551 to 609 (MNCN…QPAS) and 626 to 687 (CPTQ…PAPK).

It belongs to the chloride channel (TC 2.A.49) family. CLCNKA subfamily. Homodimer. Interacts with BSND. In terms of tissue distribution, expressed predominantly in the kidney. Expressed strongly in the cortical thick ascending limb and the distal convoluted tubule, with minor expression in the S3 segment of the proximal tubule and the cortical collecting tubule.

The protein localises to the basolateral cell membrane. It carries out the reaction chloride(in) = chloride(out). The catalysed reaction is bromide(in) = bromide(out). It catalyses the reaction nitrate(in) = nitrate(out). The enzyme catalyses iodide(out) = iodide(in). Activated by extracellular Ca(2+) and inhibited by extracellular acidic pH. Functionally, anion-selective channel permeable to small monovalent anions with ion selectivity for chloride &gt; bromide &gt; nitrate &gt; iodide. Forms a homodimeric channel where each subunit has its own ion conduction pathway. Conducts double-barreled currents controlled by two types of gates, two fast gates that control each subunit independently and a slow common gate that opens and shuts off both subunits simultaneously. Assembles with the regulatory subunit BSND/Barttin for sorting at the basolateral plasma membrane domain. CLCNKA:BSND channels are activated upon membrane hyperpolarization mostly controlled by fast gating. Mediates transepithelial chloride transport from the lumen to interstitial compartment along the thin ascending limb of Henle's loop, contributing to generation of hypertonic medullary interstitium as a countercurrent system to achieve urine concentration. Conducts chloride currents in the stria vascularis of the inner ear to establish the endocochlear potential necessary for normal hearing. The polypeptide is Chloride channel protein ClC-Ka (Rattus norvegicus (Rat)).